A 682-amino-acid chain; its full sequence is Protein ACTIVITY OF BC1 COMPLEX KINASE 1, chloroplastic (682 aa).

Residues 1–79 constitute a chloroplast transit peptide; that stretch reads MESIHCNSLL…NSTDASVMTT (79 aa). A Protein kinase domain is found at 236 to 567; that stretch reads KISSQTIAAA…IQVLFKDGVF (332 aa). ATP contacts are provided by residues 242–250 and lysine 265; that span reads IAAASLGQV. The Proton acceptor role is filled by aspartate 400.

This sequence belongs to the protein kinase superfamily. ADCK protein kinase family. As to quaternary structure, interacts with ABC1K3 in plastoglobules (PG). As to expression, expressed in all tissues (e.g. especially in leaves) at all developmental stages from seed germination to flowering, except in the root tips.

The protein localises to the plastid. Its subcellular location is the chloroplast. The protein resides in the plastoglobule. The catalysed reaction is L-seryl-[protein] + ATP = O-phospho-L-seryl-[protein] + ADP + H(+). The enzyme catalyses L-threonyl-[protein] + ATP = O-phospho-L-threonyl-[protein] + ADP + H(+). In terms of biological role, kinase that can phosphorylate the tocopherol cyclase VTE1, a key enzyme of tocopherol (vitamin E) metabolism and involved in the recycling of oxidated alpha-tocopherol quinone, possibly stabilizing it at plastoglobules. Also regulates plastoglobule protein composition. Prevents photodamage of chloroplasts under continuous red light, thus working in opposition to ABC1K3. Together with ABC1K1, contributes to plastoglobule (PG) function in prenyl-lipid metabolism, stress response, and thylakoid remodeling. Involved in chlorophyll degradation and in the maintenance of the number of chlorophyll-binding photosynthetic thylakoid membranes. Ensures photosynthetic electron transport by regulating the homeostasis of plastoquinone, beta-carotene and xanthophyll lutein, as well as membrane antioxidant tocopherol metabolism. Seems to affect specifically stability or turnover of D1 protein, product of psbA, one of the four core subunits of the photosystem II (PSII). Required for photooxidative stress responses, including the induction of oxidative stress response genes (e.g. FSD1, CSD1, CAT1, and UTG71C1), to prevent photosystem II core and chlorophyll degradations. This Arabidopsis thaliana (Mouse-ear cress) protein is Protein ACTIVITY OF BC1 COMPLEX KINASE 1, chloroplastic.